The following is a 346-amino-acid chain: Phenylalanine--tRNA ligase alpha subunit (346 aa).

Position 259 (E259) interacts with Mg(2+).

Belongs to the class-II aminoacyl-tRNA synthetase family. Phe-tRNA synthetase alpha subunit type 1 subfamily. Tetramer of two alpha and two beta subunits. Mg(2+) serves as cofactor.

It is found in the cytoplasm. The catalysed reaction is tRNA(Phe) + L-phenylalanine + ATP = L-phenylalanyl-tRNA(Phe) + AMP + diphosphate + H(+). In Lactococcus lactis subsp. lactis (strain IL1403) (Streptococcus lactis), this protein is Phenylalanine--tRNA ligase alpha subunit.